Consider the following 440-residue polypeptide: Probable exopolygalacturonase C (440 aa).

An N-terminal signal peptide occupies residues 1 to 21; the sequence is MLITNPALLGILASLVPLALG. Asn-84 and Asn-151 each carry an N-linked (GlcNAc...) asparagine glycan. PbH1 repeat units lie at residues 188-210, 217-238, and 240-261; these read GDDI…PFNT, GTNI…AVNT, and SHNI…SIGS. N-linked (GlcNAc...) asparagine glycosylation is present at Asn-219. Asp-231 (proton donor) is an active-site residue. Residue His-255 is part of the active site. Asn-271 carries N-linked (GlcNAc...) asparagine glycosylation. The PbH1 4 repeat unit spans residues 272–293; that stretch reads ITNLRFEDVTVIDALYAARFKS. Residue Asn-313 is glycosylated (N-linked (GlcNAc...) asparagine). A disulfide bridge connects residues Cys-389 and Cys-395. Asn-434 is a glycosylation site (N-linked (GlcNAc...) asparagine).

The protein belongs to the glycosyl hydrolase 28 family.

The protein resides in the secreted. The enzyme catalyses [(1-&gt;4)-alpha-D-galacturonosyl](n) + H2O = alpha-D-galacturonate + [(1-&gt;4)-alpha-D-galacturonosyl](n-1). In terms of biological role, specific in hydrolyzing the terminal glycosidic bond of polygalacturonic acid and oligogalacturonates. The polypeptide is Probable exopolygalacturonase C (pgxC) (Aspergillus fumigatus (strain ATCC MYA-4609 / CBS 101355 / FGSC A1100 / Af293) (Neosartorya fumigata)).